A 73-amino-acid polypeptide reads, in one-letter code: uncharacterized protein (73 aa).

The tract at residues 1 to 32 is disordered; the sequence is MFLSSAVRKDSNGVRHLPSVQRWTPGSPPTRA.

This is an uncharacterized protein from Frog virus 3 (isolate Goorha) (FV-3).